The sequence spans 409 residues: Putative competence-damage inducible protein (409 aa).

The protein belongs to the CinA family.

The polypeptide is Putative competence-damage inducible protein (Clostridium botulinum (strain Langeland / NCTC 10281 / Type F)).